We begin with the raw amino-acid sequence, 190 residues long: Elongation factor P 2 (190 aa).

The protein belongs to the elongation factor P family.

Its subcellular location is the cytoplasm. Its pathway is protein biosynthesis; polypeptide chain elongation. Involved in peptide bond synthesis. Stimulates efficient translation and peptide-bond synthesis on native or reconstituted 70S ribosomes in vitro. Probably functions indirectly by altering the affinity of the ribosome for aminoacyl-tRNA, thus increasing their reactivity as acceptors for peptidyl transferase. The sequence is that of Elongation factor P 2 (efp2) from Chlamydia trachomatis serovar D (strain ATCC VR-885 / DSM 19411 / UW-3/Cx).